A 583-amino-acid polypeptide reads, in one-letter code: L-galactono-1,4-lactone dehydrogenase 2, mitochondrial (583 aa).

A mitochondrion-targeting transit peptide spans 1–36 (MRRLLLAGILRRASSSPSSHHHLHLVRALSASSPLP). The propeptide at 37–78 (ASDADLRKYAGYALLLLGCGAATYYSFPLPPDALHKKAVPFK) is removed in mature form. The chain crosses the membrane as a helical span at residues 45–61 (YAGYALLLLGCGAATYY). Positions 95–266 (THEVHTRVLL…AEVTLQCVER (172 aa)) constitute an FAD-binding PCMH-type domain.

FAD is required as a cofactor.

The protein localises to the mitochondrion membrane. The catalysed reaction is L-galactono-1,4-lactone + 4 Fe(III)-[cytochrome c] = L-dehydroascorbate + 4 Fe(II)-[cytochrome c] + 5 H(+). The protein operates within cofactor biosynthesis; L-ascorbate biosynthesis. Involved in the biosynthesis of ascorbic acid. The sequence is that of L-galactono-1,4-lactone dehydrogenase 2, mitochondrial (GLDH2) from Oryza sativa subsp. japonica (Rice).